The sequence spans 478 residues: Solute carrier family 49 member 4 (478 aa).

Residues 1–27 (MGSGWSSEEEERQPLLGPGLGPAPGAT) are disordered. Residues 1–51 (MGSGWSSEEEERQPLLGPGLGPAPGATRRGREAAAVLPAAGPSPGRVYGRR) lie on the Cytoplasmic side of the membrane. The short motif at 15–16 (LL) is the Di-leucine motif; mediates lysosomal localization element. Residues 52 to 72 (WLVLLLFSLLAFAQGLVWNTW) form a helical membrane-spanning segment. The Lumenal portion of the chain corresponds to 73-89 (GPIQNSARQAYSFTGWD). A helical membrane pass occupies residues 90-110 (IALLVLWGPIGFLPCFAFMWL). The Cytoplasmic portion of the chain corresponds to 111–117 (LDKRGLR). A helical membrane pass occupies residues 118-138 (ITVLLTSFLMVLGTGLRCIPV). Residues 139–152 (SDLTLKKRLIHGGQ) lie on the Lumenal side of the membrane. Residues 153-173 (ILNGLAGPTVMNAAPFLSTTW) form a helical membrane-spanning segment. The Cytoplasmic segment spans residues 174–184 (FSADERATATA). The chain crosses the membrane as a helical span at residues 185–205 (IASMLSYLGGACAFLVGPLVV). Over 206 to 229 (PAPNGTAPLLTAESSRDHIKDRIE) the chain is Lumenal. The N-linked (GlcNAc...) asparagine glycan is linked to asparagine 209. The chain crosses the membrane as a helical span at residues 230-250 (TVLYAEFGVVCLIFSATLAYF). The Cytoplasmic portion of the chain corresponds to 251–281 (PPRPPLPPSVAAASQRLSYRRSFCRLLSNLR). A helical membrane pass occupies residues 282-302 (FLMIALAYAIPLGVFAGWSGV). At 303-314 (LDLILTPVHVSQ) the chain is on the lumenal side. Residues 315–335 (VDAGWIGFWSIVGGCVVGIAM) form a helical membrane-spanning segment. At 336-347 (ARFADFIRGMLK) the chain is on the cytoplasmic side. The helical transmembrane segment at 348–368 (LILLLLFSGATLSSTWFTLTC) threads the bilayer. Topologically, residues 369-384 (LNSVTHLPLTTVTLYA) are lumenal. The helical transmembrane segment at 385 to 405 (SCILLGVFLNSSVPIFFELFV) threads the bilayer. The Cytoplasmic segment spans residues 406-414 (ETVYPVPEG). A helical transmembrane segment spans residues 415–435 (ITCGVVTFLSNMFMGVLLFFV). At 436-442 (TFYHTEL) the chain is on the lumenal side. A helical membrane pass occupies residues 443-463 (SWFNWCLPGSCLLSLLLILCF). Topologically, residues 464–478 (RESYDRLYLDVVVSV) are cytoplasmic.

It belongs to the major facilitator superfamily. In terms of processing, cleaved in lysosomes by cathepsin L between Leu-214 and Ala-261, generating a N-glycosylated N-terminal and a non-glycosylated C-terminal fragment.

The protein localises to the lysosome membrane. It carries out the reaction pyridoxine(out) + n H(+)(out) = pyridoxine(in) + n H(+)(in). Functionally, mediates H(+)-dependent pyridoxine transport. In Rattus norvegicus (Rat), this protein is Solute carrier family 49 member 4 (Slc49a4).